A 340-amino-acid polypeptide reads, in one-letter code: MLSLSKNWNTLIKPNKVAYENFPETNNKAKIVVEPLERGFGLTLGNAMRRVLLSSLQGAAITSIKIPAIEHEFSSIPGVKEDVSEVILNIKGIEVKMHVAEKRIMKLKATGPCVITAGMIETGHDVEILNPDHVICNLAKNKQLEMELTCKVGKGYVLSTNSYEDNLPIGEIAIDALFNPVKSVTYKVENTRVGQVTDYDKLIMFVETNGDLLPEMAVGLAARILQEQLQLFISFEEQEEDKQVKTDALPFSPYLLKRVDELELSVRSANCLKNDNIIYIGDLVKRTESDMLRTPNFGRKSLNEIKEILAKFNLRFGMDVPDWPPENIQELSNRYEDSYN.

An alpha N-terminal domain (alpha-NTD) region spans residues 1–236 (MLSLSKNWNT…EQLQLFISFE (236 aa)). The interval 246–340 (TDALPFSPYL…LSNRYEDSYN (95 aa)) is alpha C-terminal domain (alpha-CTD).

The protein belongs to the RNA polymerase alpha chain family. As to quaternary structure, homodimer. The RNAP catalytic core consists of 2 alpha, 1 beta, 1 beta' and 1 omega subunit. When a sigma factor is associated with the core the holoenzyme is formed, which can initiate transcription.

It carries out the reaction RNA(n) + a ribonucleoside 5'-triphosphate = RNA(n+1) + diphosphate. DNA-dependent RNA polymerase catalyzes the transcription of DNA into RNA using the four ribonucleoside triphosphates as substrates. The protein is DNA-directed RNA polymerase subunit alpha of Rickettsia felis (strain ATCC VR-1525 / URRWXCal2) (Rickettsia azadi).